The sequence spans 342 residues: Ribosomal RNA small subunit methyltransferase H (342 aa).

Residues 62 to 64 (GGH), D82, F108, D129, and Q136 contribute to the S-adenosyl-L-methionine site. The disordered stretch occupies residues 280-319 (RHSKGQYPEDENLPMPPKRPRYFSKPKRVGPSKAEISHNP). A compositionally biased stretch (basic residues) spans 297–309 (KRPRYFSKPKRVG).

It belongs to the methyltransferase superfamily. RsmH family.

Its subcellular location is the cytoplasm. The enzyme catalyses cytidine(1402) in 16S rRNA + S-adenosyl-L-methionine = N(4)-methylcytidine(1402) in 16S rRNA + S-adenosyl-L-homocysteine + H(+). Its function is as follows. Specifically methylates the N4 position of cytidine in position 1402 (C1402) of 16S rRNA. The sequence is that of Ribosomal RNA small subunit methyltransferase H from Psychrobacter cryohalolentis (strain ATCC BAA-1226 / DSM 17306 / VKM B-2378 / K5).